The chain runs to 86 residues: Small ribosomal subunit protein bS18 (86 aa).

The protein belongs to the bacterial ribosomal protein bS18 family. Part of the 30S ribosomal subunit. Forms a tight heterodimer with protein bS6.

Its function is as follows. Binds as a heterodimer with protein bS6 to the central domain of the 16S rRNA, where it helps stabilize the platform of the 30S subunit. This is Small ribosomal subunit protein bS18 from Campylobacter lari (strain RM2100 / D67 / ATCC BAA-1060).